Here is a 121-residue protein sequence, read N- to C-terminus: MTVKINTKDGLIELSDDVIATVVGGSATEIFGVVGMASKSAIKDNFQSLLRKENYAKGVVVKSTDLGISVDVYTVMSYGVKISEVSKNIQERVKFNLESQLGLTADMVNVYVQNIKVVGEN.

This is an uncharacterized protein from Streptococcus pyogenes serotype M6 (strain ATCC BAA-946 / MGAS10394).